The primary structure comprises 481 residues: Acyl-CoA ligase cnsG (481 aa).

Residues 3 to 11 carry the PTS2-type peroxisomal targeting signal motif; it reads SPQLPPSMK. ATP is bound by residues 124-132, 263-268, Asp-353, and Arg-368; these read KSGTTGNPK and NGYGMT. Thr-268 serves as a coordination point for substrate. CoA contacts are provided by residues 376–378 and 446–448; these read GGL and AIF. Lys-466 is an ATP binding site.

This sequence belongs to the ATP-dependent AMP-binding enzyme family.

Its pathway is alkaloid biosynthesis. Functionally, acyl-CoA ligase; part of the gene cluster that mediates the biosynthesis of communesins, a prominent class of indole alkaloids with great potential as pharmaceuticals. Communesins are biosynthesized by the coupling of tryptamine and aurantioclavine, two building blocks derived from L-tryptophan. The L-tryptophan decarboxylase cnsB converts L-tryptophan to tryptamine, whereas the tryptophan dimethylallyltransferase cnsF converts L-tryptophan to 4-dimethylallyl tryptophan which is further transformed to aurantioclavine by the aurantioclavine synthase cnsA, probably aided by the catalase cnsD. The cytochrome P450 monooxygenase cnsC catalyzes the heterodimeric coupling between the two different indole moieties, tryptamine and aurantioclavine, to construct vicinal quaternary stereocenters and yield the heptacyclic communesin scaffold. The O-methyltransferase cnsE then methylates the communesin scaffold to produce communesin K, the simplest characterized communesin that contains the heptacyclic core. The dioxygenase cnsJ converts communesin K into communesin I. Acylation to introduce the hexadienyl group at position N16 of communesin I by the acyltransferase cnsK leads to the production of communesin B. The hexadienyl group is produced by the highly reducing polyketide synthase cnsI, before being hydrolytically removed from cnsI by the serine hydrolase cnsH, converted into hexadienyl-CoA by the CoA ligase cnsG, and then transferred to communesin I by cnsK. Surprisingly, cnsK may also be a promiscuous acyltransferase that can tolerate a range of acyl groups, including acetyl-, propionyl-, and butyryl-CoA, which lead to communesins A, G and H respectively. The roles of the alpha-ketoglutarate-dependent dioxygenases cnsM and cnsP have still to be determined. This chain is Acyl-CoA ligase cnsG, found in Penicillium expansum (Blue mold rot fungus).